Here is a 397-residue protein sequence, read N- to C-terminus: Succinyl-diaminopimelate desuccinylase (397 aa).

H73 is a Zn(2+) binding site. The active site involves D75. A Zn(2+)-binding site is contributed by D106. Catalysis depends on E140, which acts as the Proton acceptor. Zn(2+)-binding residues include E141, E169, and H366.

The protein belongs to the peptidase M20A family. DapE subfamily. Homodimer. Requires Zn(2+) as cofactor. It depends on Co(2+) as a cofactor.

The catalysed reaction is N-succinyl-(2S,6S)-2,6-diaminopimelate + H2O = (2S,6S)-2,6-diaminopimelate + succinate. It participates in amino-acid biosynthesis; L-lysine biosynthesis via DAP pathway; LL-2,6-diaminopimelate from (S)-tetrahydrodipicolinate (succinylase route): step 3/3. Functionally, catalyzes the hydrolysis of N-succinyl-L,L-diaminopimelic acid (SDAP), forming succinate and LL-2,6-diaminopimelate (DAP), an intermediate involved in the bacterial biosynthesis of lysine and meso-diaminopimelic acid, an essential component of bacterial cell walls. This is Succinyl-diaminopimelate desuccinylase from Rhizobium leguminosarum bv. trifolii (strain WSM2304).